A 641-amino-acid polypeptide reads, in one-letter code: SUMO-activating enzyme subunit 2-B (641 aa).

Residues 24-29 (GAGGIG), D48, 56-59 (NLNR), K72, 95-96 (SI), and 117-122 (DNNAAR) contribute to the ATP site. Residues C158 and C161 each contribute to the Zn(2+) site. C173 (glycyl thioester intermediate) is an active-site residue. Zn(2+) is bound by residues C439 and C442. Residues 546-641 (GDVPEKGPQK…EEDDDIIALD (96 aa)) form a disordered region. A compositionally biased stretch (basic and acidic residues) spans 548-561 (VPEKGPQKPPEESV). Positions 562–579 (KNITNGSDDGAQPSTSKA) are enriched in polar residues. Acidic residues-rich tracts occupy residues 582 to 594 (QDDVLIVDSDEES) and 630 to 641 (PVEEDDDIIALD).

This sequence belongs to the ubiquitin-activating E1 family. In terms of assembly, heterodimer of sae1 and uba2/sae2. The heterodimer corresponds to the two domains that are encoded on a single polypeptide chain in ubiquitin-activating enzyme E1. Interacts with ube2i.

It localises to the nucleus. Its pathway is protein modification; protein sumoylation. Functionally, the heterodimer acts as an E1 ligase for sumo1, sumo2, and sumo3. It mediates ATP-dependent activation of sumo proteins followed by formation of a thioester bond between a sumo protein and a conserved active site cysteine residue on uba2/sae2. This chain is SUMO-activating enzyme subunit 2-B (uba2-b), found in Xenopus laevis (African clawed frog).